Reading from the N-terminus, the 160-residue chain is Nucleotide-binding protein Tola_0795 (160 aa).

This sequence belongs to the YajQ family.

Nucleotide-binding protein. In Tolumonas auensis (strain DSM 9187 / NBRC 110442 / TA 4), this protein is Nucleotide-binding protein Tola_0795.